The sequence spans 143 residues: MFMGEFRHSLDSKGRVIVPAKFRKGLGDNFVATRGLDNCIFVYPMNEWKVLEEKIRQLPLTKSDARAFSRFFLSGASECELDKQGRISLPSNLRDYAALQKDVVIIGVSNRVEIWSQEKWDNYQQQAESSFENIAEEIVDFDI.

SpoVT-AbrB domains are found at residues 5-47 (EFRH…PMNE) and 76-119 (ASEC…SQEK).

This sequence belongs to the MraZ family. Forms oligomers.

The protein resides in the cytoplasm. It is found in the nucleoid. In Natranaerobius thermophilus (strain ATCC BAA-1301 / DSM 18059 / JW/NM-WN-LF), this protein is Transcriptional regulator MraZ.